Reading from the N-terminus, the 249-residue chain is Probable transcriptional regulatory protein LBJ_0543 (249 aa).

It belongs to the TACO1 family.

Its subcellular location is the cytoplasm. The chain is Probable transcriptional regulatory protein LBJ_0543 from Leptospira borgpetersenii serovar Hardjo-bovis (strain JB197).